Reading from the N-terminus, the 588-residue chain is Adenine deaminase (588 aa).

This sequence belongs to the metallo-dependent hydrolases superfamily. Adenine deaminase family. As to quaternary structure, homodimer. The cofactor is Mn(2+).

It carries out the reaction adenine + H2O + H(+) = hypoxanthine + NH4(+). This is Adenine deaminase from Escherichia coli (strain 55989 / EAEC).